The sequence spans 387 residues: Exodeoxyribonuclease 7 large subunit (387 aa).

It belongs to the XseA family. In terms of assembly, heterooligomer composed of large and small subunits.

It localises to the cytoplasm. The enzyme catalyses Exonucleolytic cleavage in either 5'- to 3'- or 3'- to 5'-direction to yield nucleoside 5'-phosphates.. Functionally, bidirectionally degrades single-stranded DNA into large acid-insoluble oligonucleotides, which are then degraded further into small acid-soluble oligonucleotides. The sequence is that of Exodeoxyribonuclease 7 large subunit from Campylobacter hominis (strain ATCC BAA-381 / DSM 21671 / CCUG 45161 / LMG 19568 / NCTC 13146 / CH001A).